We begin with the raw amino-acid sequence, 224 residues long: Small ribosomal subunit protein uS2 (224 aa).

Residues 1 to 14 (MAEAKPAPEKEAAV) are compositionally biased toward basic and acidic residues. Residues 1 to 32 (MAEAKPAPEKEAAVKTESVPVADDEAASAKEG) are disordered.

Belongs to the universal ribosomal protein uS2 family.

In Methanosarcina mazei (strain ATCC BAA-159 / DSM 3647 / Goe1 / Go1 / JCM 11833 / OCM 88) (Methanosarcina frisia), this protein is Small ribosomal subunit protein uS2.